The primary structure comprises 219 residues: Ribose-5-phosphate isomerase A (219 aa).

Substrate is bound by residues 28–31, 81–84, and 94–97; these read TGST, DGAD, and KGGG. Catalysis depends on glutamate 103, which acts as the Proton acceptor. Lysine 121 is a substrate binding site.

Belongs to the ribose 5-phosphate isomerase family. In terms of assembly, homodimer.

It catalyses the reaction aldehydo-D-ribose 5-phosphate = D-ribulose 5-phosphate. Its pathway is carbohydrate degradation; pentose phosphate pathway; D-ribose 5-phosphate from D-ribulose 5-phosphate (non-oxidative stage): step 1/1. Catalyzes the reversible conversion of ribose-5-phosphate to ribulose 5-phosphate. The protein is Ribose-5-phosphate isomerase A of Shewanella oneidensis (strain ATCC 700550 / JCM 31522 / CIP 106686 / LMG 19005 / NCIMB 14063 / MR-1).